Reading from the N-terminus, the 88-residue chain is Large ribosomal subunit protein bL31B (88 aa).

The protein belongs to the bacterial ribosomal protein bL31 family. Type B subfamily. As to quaternary structure, part of the 50S ribosomal subunit.

In Corynebacterium glutamicum (strain R), this protein is Large ribosomal subunit protein bL31B.